A 315-amino-acid chain; its full sequence is Homoserine O-succinyltransferase (315 aa).

The active-site Acyl-thioester intermediate is Cys-142. Substrate contacts are provided by Lys-163 and Ser-192. His-235 serves as the catalytic Proton acceptor. Glu-237 is a catalytic residue. Arg-249 lines the substrate pocket. A compositionally biased stretch (basic and acidic residues) spans 249–258 (RDCEKSDNAP). The segment at 249 to 271 (RDCEKSDNAPKPENYFPDDDATK) is disordered.

The protein belongs to the MetA family.

Its subcellular location is the cytoplasm. The catalysed reaction is L-homoserine + succinyl-CoA = O-succinyl-L-homoserine + CoA. It participates in amino-acid biosynthesis; L-methionine biosynthesis via de novo pathway; O-succinyl-L-homoserine from L-homoserine: step 1/1. Functionally, transfers a succinyl group from succinyl-CoA to L-homoserine, forming succinyl-L-homoserine. The sequence is that of Homoserine O-succinyltransferase from Pseudoalteromonas translucida (strain TAC 125).